A 388-amino-acid chain; its full sequence is RNA binding motif protein, X-linked-like-1 (388 aa).

Residues 8-86 (GKLFIGGLNT…KAIKVEQATK (79 aa)) form the RRM domain. Over residues 61-80 (DAKDVARDMNGKSLDGKAIK) the composition is skewed to basic and acidic residues. The tract at residues 61 to 388 (DAKDVARDMN…SDRGGGQKQI (328 aa)) is disordered. Lys80 is covalently cross-linked (Glycyl lysine isopeptide (Lys-Gly) (interchain with G-Cter in SUMO2)). Ser88 carries the phosphoserine modification. The span at 148 to 161 (RGPPPRSGGPPPKR) shows a compositional bias: pro residues. 2 stretches are compositionally biased toward basic and acidic residues: residues 191-212 (PRRE…DGYS) and 238-271 (YTYR…EYSD). The span at 320-332 (SRDSYSSSRSDLY) shows a compositional bias: low complexity. Basic and acidic residues-rich tracts occupy residues 333 to 344 (SSDRDRVGRQER) and 377 to 388 (SRSDRGGGQKQI).

It localises to the nucleus. In terms of biological role, RNA-binding protein which may be involved in pre-mRNA splicing. The sequence is that of RNA binding motif protein, X-linked-like-1 (Rbmxl1) from Rattus norvegicus (Rat).